A 69-amino-acid polypeptide reads, in one-letter code: Large ribosomal subunit protein bL28 (69 aa).

This sequence belongs to the bacterial ribosomal protein bL28 family.

The chain is Large ribosomal subunit protein bL28 from Aquifex aeolicus (strain VF5).